Consider the following 239-residue polypeptide: Proteasome activator complex subunit 2 (239 aa).

N-acetylalanine is present on alanine 2. Phosphoserine is present on serine 10. Positions 65 to 86 (DIPIPDPPPKDDEMETDKQEKK) are disordered. Over residues 72-86 (PPKDDEMETDKQEKK) the composition is skewed to basic and acidic residues.

The protein belongs to the PA28 family. In terms of assembly, heterodimer of PSME1 and PSME2, which forms a hexameric ring.

In terms of biological role, implicated in immunoproteasome assembly and required for efficient antigen processing. The PA28 activator complex enhances the generation of class I binding peptides by altering the cleavage pattern of the proteasome. This chain is Proteasome activator complex subunit 2 (PSME2), found in Sus scrofa (Pig).